The chain runs to 548 residues: Chaperonin GroEL (548 aa).

ATP contacts are provided by residues 30-33 (TLGP), K51, 87-91 (DGTTT), G415, 479-481 (NAA), and D495.

Belongs to the chaperonin (HSP60) family. In terms of assembly, forms a cylinder of 14 subunits composed of two heptameric rings stacked back-to-back. Interacts with the co-chaperonin GroES.

Its subcellular location is the cytoplasm. It catalyses the reaction ATP + H2O + a folded polypeptide = ADP + phosphate + an unfolded polypeptide.. In terms of biological role, together with its co-chaperonin GroES, plays an essential role in assisting protein folding. The GroEL-GroES system forms a nano-cage that allows encapsulation of the non-native substrate proteins and provides a physical environment optimized to promote and accelerate protein folding. The chain is Chaperonin GroEL from Aliivibrio fischeri (strain MJ11) (Vibrio fischeri).